The sequence spans 100 residues: Large ribosomal subunit protein bL27 (100 aa).

Residues 1–9 (MIIMNLQIF) constitute a propeptide that is removed on maturation. A disordered region spans residues 13–32 (KGMGSSKNGRDSESKRLGTK).

This sequence belongs to the bacterial ribosomal protein bL27 family. The N-terminus is cleaved by ribosomal processing cysteine protease Prp.

In Clostridium kluyveri (strain ATCC 8527 / DSM 555 / NBRC 12016 / NCIMB 10680 / K1), this protein is Large ribosomal subunit protein bL27.